We begin with the raw amino-acid sequence, 211 residues long: Transcription factor ces-2 (211 aa).

Positions 83–101 (VSSRSSTVSSSHFSSPQRS) are enriched in low complexity. Disordered stretches follow at residues 83-152 (VSSR…HALE) and 184-211 (NSEV…TIEV). The span at 111 to 152 (PEEKKDSAYFERRRKNNDAAKRSRDARRQKEEQIASKAHALE) shows a compositional bias: basic and acidic residues. Residues 116–179 (DSAYFERRRK…AQLRFLLFSK (64 aa)) form the bZIP domain. The segment at 122 to 140 (RRRKNNDAAKRSRDARRQK) is basic motif. The leucine-zipper stretch occupies residues 144 to 172 (IASKAHALERENMQLRGKVSSLEQEAAQL). Low complexity predominate over residues 190–200 (ESNDSTETNDS). A compositionally biased stretch (basic and acidic residues) spans 201–211 (NDSKSDSTIEV).

This sequence belongs to the bZIP family. Interacts with NFIL3 transcription factor homolog atf-2.

The protein localises to the nucleus. Transcription factor. Required to activate programmed cell death in the sister cells of the serotoninergic neurosecretory motor (NSM) neurons. Negatively regulates the activity of ces-1 which in turn negatively regulates the activities of cell-killing genes. Binds to the DNA sequence 5'-RTTACGTAAY-3'. Involved in the development of the excretory duct cell, by positively modulating embryonic transcription of putative transcription factor lin-48, acting in concert with NFIL3 transcription factor homolog atf-2. Positively modulates expression of neuropeptide pigment dispersing factor homologs pdf-1 and pdf-2. The chain is Transcription factor ces-2 (ces-2) from Caenorhabditis elegans.